The primary structure comprises 465 residues: Lactaldehyde dehydrogenase (465 aa).

An NAD(+)-binding site is contributed by 220–225 (GSVEVG). Residues glutamate 240 and cysteine 274 contribute to the active site.

The protein belongs to the aldehyde dehydrogenase family. In terms of assembly, homotetramer.

It catalyses the reaction (S)-lactaldehyde + NAD(+) + H2O = (S)-lactate + NADH + 2 H(+). The protein operates within cofactor biosynthesis; coenzyme F420 biosynthesis. Its function is as follows. Involved in F420 biosynthesis through the oxidation of lactaldehyde to lactate. In Methanococcus maripaludis (strain C5 / ATCC BAA-1333), this protein is Lactaldehyde dehydrogenase.